Consider the following 728-residue polypeptide: Elongation factor 2 (728 aa).

Residues glutamate 19–valine 261 form the tr-type G domain. GTP-binding positions include alanine 28–threonine 35, aspartate 94–histidine 98, and asparagine 148–aspartate 151. The residue at position 596 (histidine 596) is a Diphthamide.

It belongs to the TRAFAC class translation factor GTPase superfamily. Classic translation factor GTPase family. EF-G/EF-2 subfamily.

The protein resides in the cytoplasm. Functionally, catalyzes the GTP-dependent ribosomal translocation step during translation elongation. During this step, the ribosome changes from the pre-translocational (PRE) to the post-translocational (POST) state as the newly formed A-site-bound peptidyl-tRNA and P-site-bound deacylated tRNA move to the P and E sites, respectively. Catalyzes the coordinated movement of the two tRNA molecules, the mRNA and conformational changes in the ribosome. The protein is Elongation factor 2 of Haloarcula marismortui (strain ATCC 43049 / DSM 3752 / JCM 8966 / VKM B-1809) (Halobacterium marismortui).